The following is a 314-amino-acid chain: Inactive protein FRIGIDA (314 aa).

Low complexity predominate over residues 1 to 18; that stretch reads MSNYPPTVAAQPTTTANP. Residues 1–31 form a disordered region; the sequence is MSNYPPTVAAQPTTTANPLLQRHQSEQRRRE. Positions 67–97 form a coiled coil; the sequence is VAVETFKRQFDDLQKHIESIENAIDSKLESN.

The protein belongs to the Frigida family.

The protein resides in the nucleus. In Arabidopsis thaliana (Mouse-ear cress), this protein is Inactive protein FRIGIDA (FRI).